We begin with the raw amino-acid sequence, 489 residues long: Protein SIP5 (489 aa).

The tract at residues 1 to 84 is disordered; that stretch reads MGNVPGKIDQ…RKTSREKELA (84 aa). A Phosphoserine modification is found at serine 13. Polar residues-rich tracts occupy residues 21–32 and 51–69; these read SSYNTTSSNSVI and LVNN…GSHL. A phosphothreonine mark is found at threonine 183 and threonine 433. The disordered stretch occupies residues 419-489; sequence SNRLIDPSHS…SKNRNTSLRP (71 aa). A Phosphoserine modification is found at serine 436. Phosphothreonine is present on threonine 438. Residues 461-477 are compositionally biased toward basic and acidic residues; it reads QMVREAIRLSLEDQDNR.

It belongs to the SIP5 family. As to quaternary structure, interacts with NPA1, SNF1 and REG1.

The protein resides in the cytoplasm. May negatively regulate the SNF1 kinase by promoting the interaction of the REG1/GLC7 phosphatase complex with the kinase. Deletion of SIP5 promotes resistance to artemisinin, which is probably an indirect effect of an action on the electron transport chain. This is Protein SIP5 (SIP5) from Saccharomyces cerevisiae (strain ATCC 204508 / S288c) (Baker's yeast).